The primary structure comprises 264 residues: MKPTTIASLQKCKQEKKRFATITAYDYSFAKLFADEGLNVMLVGDSLGMTVQGHDSTLPVTVADIAYHTAAVRRGAPNCLLLADLPFMAYATPEQAFENAATVMRAGANMVKIEGGEWLVETVQMLTERAVPVCGHLGLTPQSVNIFGGYKVQGRGDEAADRLLSDALALEAAGAQLLVLECVPVELAKRITEALAIPVIGIGAGNVTDGQILVMHDAFGITGGHIPKFAKNFLAETGDIRAAVRQYMAEVESGVYPGEEHSFH.

Positions 45 and 84 each coordinate Mg(2+). Residues 45 to 46 (DS), aspartate 84, and lysine 112 contribute to the 3-methyl-2-oxobutanoate site. Glutamate 114 contributes to the Mg(2+) binding site. Catalysis depends on glutamate 181, which acts as the Proton acceptor.

Belongs to the PanB family. In terms of assembly, homodecamer; pentamer of dimers. The cofactor is Mg(2+).

The protein localises to the cytoplasm. It catalyses the reaction 3-methyl-2-oxobutanoate + (6R)-5,10-methylene-5,6,7,8-tetrahydrofolate + H2O = 2-dehydropantoate + (6S)-5,6,7,8-tetrahydrofolate. It participates in cofactor biosynthesis; (R)-pantothenate biosynthesis; (R)-pantoate from 3-methyl-2-oxobutanoate: step 1/2. Functionally, catalyzes the reversible reaction in which hydroxymethyl group from 5,10-methylenetetrahydrofolate is transferred onto alpha-ketoisovalerate to form ketopantoate. This Escherichia coli O17:K52:H18 (strain UMN026 / ExPEC) protein is 3-methyl-2-oxobutanoate hydroxymethyltransferase.